The primary structure comprises 507 residues: Bifunctional purine biosynthesis protein PurH (507 aa).

The 149-residue stretch at 1 to 149 (MSESKRIKTA…KNYNDVIIVA (149 aa)) folds into the MGS-like domain.

This sequence belongs to the PurH family.

The enzyme catalyses (6R)-10-formyltetrahydrofolate + 5-amino-1-(5-phospho-beta-D-ribosyl)imidazole-4-carboxamide = 5-formamido-1-(5-phospho-D-ribosyl)imidazole-4-carboxamide + (6S)-5,6,7,8-tetrahydrofolate. The catalysed reaction is IMP + H2O = 5-formamido-1-(5-phospho-D-ribosyl)imidazole-4-carboxamide. It participates in purine metabolism; IMP biosynthesis via de novo pathway; 5-formamido-1-(5-phospho-D-ribosyl)imidazole-4-carboxamide from 5-amino-1-(5-phospho-D-ribosyl)imidazole-4-carboxamide (10-formyl THF route): step 1/1. Its pathway is purine metabolism; IMP biosynthesis via de novo pathway; IMP from 5-formamido-1-(5-phospho-D-ribosyl)imidazole-4-carboxamide: step 1/1. The chain is Bifunctional purine biosynthesis protein PurH from Bacteroides thetaiotaomicron (strain ATCC 29148 / DSM 2079 / JCM 5827 / CCUG 10774 / NCTC 10582 / VPI-5482 / E50).